Consider the following 395-residue polypeptide: Mannan polymerase complexes subunit MNN9 (395 aa).

Over 2 to 17 (SLSLVSYRLRKNPWVN) the chain is Cytoplasmic. A helical; Signal-anchor for type II membrane protein transmembrane segment spans residues 18-33 (IFLPVLAIFLIYIIFF). The Lumenal segment spans residues 34–395 (QRDQSLLGLN…LVYHIEEENH (362 aa)).

The protein belongs to the ANP1/MMN9/VAN1 family. As to quaternary structure, the M-Pol I complex contains MNN9 and VAN1. The M-Pol II complex is composed of ANP1, MNN9, MNN10, MNN11 and HOC1.

Its subcellular location is the endoplasmic reticulum membrane. The protein localises to the golgi apparatus membrane. The protein operates within protein modification; protein glycosylation. In terms of biological role, the M-Pol I and M-Pol II complexes possess alpha-1,6-mannosyltransferase activity and are probably involved in the elongation of the mannan backbone of N-linked glycans on cell wall and periplasmic proteins. May also provide alpha-1,2-mannosyltransferase activity to the M-Pol I complex. This chain is Mannan polymerase complexes subunit MNN9 (MNN9), found in Saccharomyces cerevisiae (strain ATCC 204508 / S288c) (Baker's yeast).